The following is a 316-amino-acid chain: C1GALT1-specific chaperone 1 (316 aa).

The Cytoplasmic portion of the chain corresponds to 1–6; sequence MLSESS. A helical; Signal-anchor for type II membrane protein membrane pass occupies residues 7–26; that stretch reads SFLKGVMLGSIFCALITMLG. Over 27–316 the chain is Lumenal; it reads HIRIGNRMHH…FLPPNGSEND (290 aa).

It belongs to the glycosyltransferase 31 family. Beta3-Gal-T subfamily. As to quaternary structure, associates with core 1 beta-3-galactosyltransferase (C1GALT1), probably not with the soluble active form.

The protein resides in the membrane. Its function is as follows. Probable chaperone required for the generation of 1 O-glycan Gal-beta1-3GalNAc-alpha1-Ser/Thr (T antigen), which is a precursor for many extended O-glycans in glycoproteins. Probably acts as a specific molecular chaperone assisting the folding/stability of core 1 beta-3-galactosyltransferase (C1GALT1). The polypeptide is C1GALT1-specific chaperone 1 (C1galt1c1) (Mus musculus (Mouse)).